The chain runs to 681 residues: Macrolide export ATP-binding/permease protein MacB (681 aa).

The ABC transporter domain maps to 6 to 244 (LKLAAVTRRF…FAEVGVGAAA (239 aa)). Residue 42-49 (GASGSGKS) participates in ATP binding. Residues 246–274 (TETAADTRSAPASGDAPPPANNDTAADPA) are disordered. 4 consecutive transmembrane segments (helical) span residues 306–326 (LLTM…VAVG), 554–574 (LTLL…IGVM), 611–631 (LVCL…GALF), and 644–664 (AGAI…FGFM).

This sequence belongs to the ABC transporter superfamily. Macrolide exporter (TC 3.A.1.122) family. As to quaternary structure, homodimer.

It is found in the cell inner membrane. In terms of biological role, non-canonical ABC transporter that contains transmembrane domains (TMD), which form a pore in the inner membrane, and an ATP-binding domain (NBD), which is responsible for energy generation. Confers resistance against macrolides. The sequence is that of Macrolide export ATP-binding/permease protein MacB from Burkholderia cenocepacia (strain HI2424).